Reading from the N-terminus, the 262-residue chain is Small ribosomal subunit protein uS2 (262 aa).

Residues 236–262 (AGGAAEAPAAEDVQTEEAAAPEADSAE) form a disordered region.

This sequence belongs to the universal ribosomal protein uS2 family.

The polypeptide is Small ribosomal subunit protein uS2 (Psychrobacter sp. (strain PRwf-1)).